A 279-amino-acid polypeptide reads, in one-letter code: Acetyl-coenzyme A carboxylase carboxyl transferase subunit beta (279 aa).

Residues 23-279 (LWWKCEECGA…LVTLFSMLKV (257 aa)) form the CoA carboxyltransferase N-terminal domain. Cys-27, Cys-30, Cys-46, and Cys-49 together coordinate Zn(2+). Residues 27 to 49 (CEECGAMLHKKQFEDHFFTCAEC) form a C4-type zinc finger.

This sequence belongs to the AccD/PCCB family. In terms of assembly, acetyl-CoA carboxylase is a heterohexamer composed of biotin carboxyl carrier protein (AccB), biotin carboxylase (AccC) and two subunits each of ACCase subunit alpha (AccA) and ACCase subunit beta (AccD). It depends on Zn(2+) as a cofactor.

The protein resides in the cytoplasm. The enzyme catalyses N(6)-carboxybiotinyl-L-lysyl-[protein] + acetyl-CoA = N(6)-biotinyl-L-lysyl-[protein] + malonyl-CoA. It functions in the pathway lipid metabolism; malonyl-CoA biosynthesis; malonyl-CoA from acetyl-CoA: step 1/1. Component of the acetyl coenzyme A carboxylase (ACC) complex. Biotin carboxylase (BC) catalyzes the carboxylation of biotin on its carrier protein (BCCP) and then the CO(2) group is transferred by the transcarboxylase to acetyl-CoA to form malonyl-CoA. The protein is Acetyl-coenzyme A carboxylase carboxyl transferase subunit beta of Pelodictyon phaeoclathratiforme (strain DSM 5477 / BU-1).